The chain runs to 246 residues: MSTLKVVSSKLAAEIDKELMGPQIGFTLQQLMELAGFSVAQAVCRQFPLRGKTETEKGKHVFVIAGPGNNGGDGLVCARHLKLFGYNPVVFYPKRSERTEFYKQLVHQLNFFKVPVLSQDEGNWLEYLKPEKTLCIVDAIFGFSFKPPMREPFKGIVEELCKVQNIIPIVSVDVPTGWDVDKGPISQPSINPAVLVSLTVPKPCSSHIRENQTTHYVGGRFIPRDFANKFGFEPFGYESTDQILKL.

The region spanning 12-234 (AAEIDKELMG…DFANKFGFEP (223 aa)) is the YjeF N-terminal domain. 69–73 (NNGGD) is a binding site for (6S)-NADPHX. K(+)-binding residues include Asn70 and Asp138. (6S)-NADPHX contacts are provided by residues 142-148 (GFSFKPP) and Asp173. Residue Thr176 participates in K(+) binding.

It belongs to the NnrE/AIBP family. Requires K(+) as cofactor.

The protein resides in the cytoplasm. It is found in the mitochondrion. The enzyme catalyses (6R)-NADHX = (6S)-NADHX. It catalyses the reaction (6R)-NADPHX = (6S)-NADPHX. Its function is as follows. Catalyzes the epimerization of the S- and R-forms of NAD(P)HX, a damaged form of NAD(P)H that is a result of enzymatic or heat-dependent hydration. This is a prerequisite for the S-specific NAD(P)H-hydrate dehydratase to allow the repair of both epimers of NAD(P)HX. The polypeptide is NAD(P)H-hydrate epimerase (Saccharomyces cerevisiae (strain ATCC 204508 / S288c) (Baker's yeast)).